Reading from the N-terminus, the 356-residue chain is Protein-glutamate methylesterase/protein-glutamine glutaminase 3 (356 aa).

Residues 3–120 (KVAIVDDSAV…KGFLEESQAR (118 aa)) form the Response regulatory domain. Asp54 bears the 4-aspartylphosphate mark. A CheB-type methylesterase domain is found at 165–356 (NQTTDRVVAL…AEEIIAFTKQ (192 aa)). Catalysis depends on residues Ser177, His203, and Asp299.

It belongs to the CheB family. Phosphorylated by CheA. Phosphorylation of the N-terminal regulatory domain activates the methylesterase activity.

It is found in the cytoplasm. It carries out the reaction [protein]-L-glutamate 5-O-methyl ester + H2O = L-glutamyl-[protein] + methanol + H(+). It catalyses the reaction L-glutaminyl-[protein] + H2O = L-glutamyl-[protein] + NH4(+). In terms of biological role, involved in chemotaxis. Part of a chemotaxis signal transduction system that modulates chemotaxis in response to various stimuli. Catalyzes the demethylation of specific methylglutamate residues introduced into the chemoreceptors (methyl-accepting chemotaxis proteins or MCP) by CheR. Also mediates the irreversible deamidation of specific glutamine residues to glutamic acid. This Shewanella oneidensis (strain ATCC 700550 / JCM 31522 / CIP 106686 / LMG 19005 / NCIMB 14063 / MR-1) protein is Protein-glutamate methylesterase/protein-glutamine glutaminase 3.